Reading from the N-terminus, the 217-residue chain is Cytochrome c biogenesis ATP-binding export protein CcmA (217 aa).

The ABC transporter domain maps to 6–215 (FSAKNLACVR…HLDQFAVAEE (210 aa)). 38 to 45 (GPNGSGKS) contacts ATP.

Belongs to the ABC transporter superfamily. CcmA exporter (TC 3.A.1.107) family. In terms of assembly, the complex is composed of two ATP-binding proteins (CcmA) and two transmembrane proteins (CcmB).

The protein resides in the cell inner membrane. It carries out the reaction heme b(in) + ATP + H2O = heme b(out) + ADP + phosphate + H(+). In terms of biological role, part of the ABC transporter complex CcmAB involved in the biogenesis of c-type cytochromes; once thought to export heme, this seems not to be the case, but its exact role is uncertain. Responsible for energy coupling to the transport system. The sequence is that of Cytochrome c biogenesis ATP-binding export protein CcmA from Paramagnetospirillum magneticum (strain ATCC 700264 / AMB-1) (Magnetospirillum magneticum).